The following is a 363-amino-acid chain: Homeobox protein Hox-A2a (363 aa).

Disordered regions lie at residues 30–88 (DSFQ…LPPE), 98–117 (SKRN…GPVC), 189–220 (RMKH…SDEE), and 268–308 (DKNL…LDVS). Polar residues predominate over residues 31–44 (SFQSSSIKSSTLSR). The short motif at 88-93 (EYPWMR) is the Antp-type hexapeptide element. Residues 103–113 (LPNSTTTTISN) show a composition bias toward polar residues. The homeobox DNA-binding region spans 137–196 (SRRLRTAYTNTQLLELEKEFHFNKYLCRPRRVEIAALLDLTERQVKVWFQNRRMKHKRQT).

It belongs to the Antp homeobox family. Proboscipedia subfamily.

It is found in the nucleus. Sequence-specific transcription factor which is part of a developmental regulatory system that provides cells with specific positional identities on the anterior-posterior axis. In Takifugu rubripes (Japanese pufferfish), this protein is Homeobox protein Hox-A2a (hoxa2a).